Here is a 98-residue protein sequence, read N- to C-terminus: Citrate lyase acyl carrier protein (98 aa).

The residue at position 14 (Ser-14) is an O-(phosphoribosyl dephospho-coenzyme A)serine.

Belongs to the CitD family. In terms of assembly, oligomer with a subunit composition of (alpha,beta,gamma)6.

Its subcellular location is the cytoplasm. Its function is as follows. Covalent carrier of the coenzyme of citrate lyase. The chain is Citrate lyase acyl carrier protein from Escherichia coli O127:H6 (strain E2348/69 / EPEC).